A 342-amino-acid polypeptide reads, in one-letter code: Heat-inducible transcription repressor HrcA (342 aa).

The protein belongs to the HrcA family.

Its function is as follows. Negative regulator of class I heat shock genes (grpE-dnaK-dnaJ and groELS operons). Prevents heat-shock induction of these operons. This is Heat-inducible transcription repressor HrcA from Leptospira borgpetersenii serovar Hardjo-bovis (strain JB197).